We begin with the raw amino-acid sequence, 247 residues long: uncharacterized protein (247 aa).

An N-terminal signal peptide occupies residues 1 to 35 (MWGPGVTAEGLSVAPAPPPLLPLLLLLALALVAPS). A glycan (N-linked (GlcNAc...) asparagine) is linked at Asn57. The helical transmembrane segment at 82-102 (LSGLLILLVLFAIGYFLQRII) threads the bilayer. Residues 109 to 179 (YPRGQARPGQ…GGRSDPSCAS (71 aa)) are disordered. Over residues 160–172 (SGGGGRGRGGGGR) the composition is skewed to gly residues.

Its subcellular location is the membrane. This is an uncharacterized protein from Homo sapiens (Human).